Consider the following 318-residue polypeptide: NADH-ubiquinone oxidoreductase chain 1 (318 aa).

8 helical membrane-spanning segments follow: residues 3-23 (FINILTLLIPILIAMAFLTLV), 70-90 (LFIIAPTLSLTLALSLWIPLP), 100-120 (LGMLFILATSSLSVYSILWSG), 146-166 (MAIILLSVLLMSGSFSLQMLI), 171-191 (HIWLLIPAWPMAMMWYISTLA), 231-251 (IILMNALTSIVFLGPLYHINY), 254-273 (LYSTSFMTETLLLSTTFLWI), and 294-314 (LPLTLAFCMWYISLPIFLAGI).

Belongs to the complex I subunit 1 family. Core subunit of respiratory chain NADH dehydrogenase (Complex I) which is composed of 45 different subunits.

It localises to the mitochondrion inner membrane. It carries out the reaction a ubiquinone + NADH + 5 H(+)(in) = a ubiquinol + NAD(+) + 4 H(+)(out). Functionally, core subunit of the mitochondrial membrane respiratory chain NADH dehydrogenase (Complex I) which catalyzes electron transfer from NADH through the respiratory chain, using ubiquinone as an electron acceptor. Essential for the catalytic activity and assembly of complex I. In Rattus norvegicus (Rat), this protein is NADH-ubiquinone oxidoreductase chain 1.